The sequence spans 582 residues: Type I secretion system ATP-binding protein PrsD (582 aa).

The next 3 membrane-spanning stretches (helical) occupy residues 22–42 (FIGVGVASALVNLLYLTGSFF), 59–79 (LIALSLLALLLYAFQGAFELI), and 148–168 (IAICFLFHPVIGLIAIIGGLI). The ABC transmembrane type-1 domain occupies 22-301 (FIGVGVASAL…AIGNWRGLVA (280 aa)). The 237-residue stretch at 332–568 (LTVEGLASGP…VLRPQQVERQ (237 aa)) folds into the ABC transporter domain. An ATP-binding site is contributed by 366–373 (GPSASGKS).

Belongs to the ABC transporter superfamily. As to quaternary structure, part of a type I secretion system composed of PrsD and PrsE.

The protein localises to the cell inner membrane. In terms of biological role, mediates secretion of glycanase ExsH. This Rhizobium meliloti (strain 1021) (Ensifer meliloti) protein is Type I secretion system ATP-binding protein PrsD (prsD).